A 139-amino-acid polypeptide reads, in one-letter code: Actin-depolymerizing factor 3 (139 aa).

The ADF-H domain occupies 5–139 (ASGMAVHDDC…DLDVFKSRAN (135 aa)). A Phosphoserine modification is found at S6.

This sequence belongs to the actin-binding proteins ADF family.

The protein localises to the cytoplasm. Its subcellular location is the cytoskeleton. Functionally, actin-depolymerizing protein. Severs actin filaments (F-actin) and binds to actin monomers. This Arabidopsis thaliana (Mouse-ear cress) protein is Actin-depolymerizing factor 3 (ADF3).